Reading from the N-terminus, the 423-residue chain is Imidazolonepropionase (423 aa).

Residues H78 and H80 each contribute to the Fe(3+) site. Zn(2+)-binding residues include H78 and H80. Residues R87, Y150, and H183 each coordinate 4-imidazolone-5-propanoate. Position 150 (Y150) interacts with N-formimidoyl-L-glutamate. H247 lines the Fe(3+) pocket. H247 serves as a coordination point for Zn(2+). E250 contributes to the 4-imidazolone-5-propanoate binding site. D322 provides a ligand contact to Fe(3+). D322 lines the Zn(2+) pocket. N324 and G326 together coordinate N-formimidoyl-L-glutamate. 4-imidazolone-5-propanoate is bound at residue S327.

It belongs to the metallo-dependent hydrolases superfamily. HutI family. It depends on Zn(2+) as a cofactor. Fe(3+) serves as cofactor.

It is found in the cytoplasm. The enzyme catalyses 4-imidazolone-5-propanoate + H2O = N-formimidoyl-L-glutamate. The protein operates within amino-acid degradation; L-histidine degradation into L-glutamate; N-formimidoyl-L-glutamate from L-histidine: step 3/3. Catalyzes the hydrolytic cleavage of the carbon-nitrogen bond in imidazolone-5-propanoate to yield N-formimidoyl-L-glutamate. It is the third step in the universal histidine degradation pathway. The polypeptide is Imidazolonepropionase (Bacillus mycoides (strain KBAB4) (Bacillus weihenstephanensis)).